A 420-amino-acid chain; its full sequence is WD repeat-containing protein 21 (420 aa).

The short motif at 73-75 (RQF) is the DDB-boX element. WD repeat units lie at residues 251-289 (QSKGDVFSLKYLGDNLVIAGCRNKSVLVYDLRTKKECVQ), 293-332 (HGSSICSMQNLDFSQPKLLVSGLESKISLYDCRFLQSKKR), and 341-383 (GHSN…PFKE).

The protein resides in the cytoplasm. The protein localises to the nucleus. This chain is WD repeat-containing protein 21 (wdr21), found in Schizosaccharomyces pombe (strain 972 / ATCC 24843) (Fission yeast).